Here is a 341-residue protein sequence, read N- to C-terminus: Phosphoribosylformylglycinamidine cyclo-ligase (341 aa).

It belongs to the AIR synthase family.

The protein localises to the cytoplasm. It catalyses the reaction 2-formamido-N(1)-(5-O-phospho-beta-D-ribosyl)acetamidine + ATP = 5-amino-1-(5-phospho-beta-D-ribosyl)imidazole + ADP + phosphate + H(+). Its pathway is purine metabolism; IMP biosynthesis via de novo pathway; 5-amino-1-(5-phospho-D-ribosyl)imidazole from N(2)-formyl-N(1)-(5-phospho-D-ribosyl)glycinamide: step 2/2. This Xanthomonas axonopodis pv. citri (strain 306) protein is Phosphoribosylformylglycinamidine cyclo-ligase.